Here is a 282-residue protein sequence, read N- to C-terminus: Probable septum site-determining protein MinC (282 aa).

The segment at 108-127 (AAARSADEESANAAAAAPAA) is disordered. Low complexity predominate over residues 118–127 (ANAAAAAPAA).

Belongs to the MinC family. In terms of assembly, interacts with MinD and FtsZ.

In terms of biological role, cell division inhibitor that blocks the formation of polar Z ring septums. Rapidly oscillates between the poles of the cell to destabilize FtsZ filaments that have formed before they mature into polar Z rings. Prevents FtsZ polymerization. The sequence is that of Probable septum site-determining protein MinC from Paraburkholderia xenovorans (strain LB400).